We begin with the raw amino-acid sequence, 46 residues long: uncharacterized protein (46 aa).

This is an uncharacterized protein from Escherichia coli (strain K12).